The following is a 2236-amino-acid chain: MKAIIHDDTVVREIEGQRVQVLQKFADFELKAINKRSSIIQSRQLQVYLRSAAEFKQVIESLIESSEAVVTSQCSESSIRGQKVIGRLQQEADGKHNNLPMLENEAARLLKEGHYASDEIQKTFNNVLSRWEYLLKLLALKWRQLEKEIESIEFKNKCDSIVDWILKIKESDESGKEIFDEIRKCSMVWNEISATFQQMLDPTATDTSNYEKVHETWSNFQEYIDSLHKKLSENERFQKFVDNAEDLIKWMDDKEKEICEKYSKMDFEVMMKYRKTVEIEMKSVEQRIKDLKEQFVGMENDNLRNIPDPKNHVIDVEQRFESFQAFVQKWKTDIENSADADKLMKEAENICCWSSEKIEDLKIMATSDTPDCDEIIMWIETNNFDFNSWDNVVVQFLASSQELLNKQNNGNVKQEVERTTELYELAKRTMKTCNEFLEDRIQTINMEKLIFQTHQKAVILASFLQNHEESPEDMNAEDIEKEIRVIDGITVRCTSVVEQIENIEDELRQKPEQLNQLSVYASKQVNDLNEMKEVLKTTVNSRKAILQRLLDVTYFLDNCCETRKHTDTMLSNVKSSRVKLEIVQPIKDQLDSLKVEMVDMMLDDQQKNMANEELRKTYENLKKIEMEVGRQASQKEARKAADRTEAFVGRVQNWIDNNQIQDDTDIVSETVNLRRTTTHYQHLLSICASYKKSIDSKLEELANVYTDNDPRCLLEGIQNSVENFEVKIHQKVDDTKKLLHITENMNELNSQNEWIRAKIKSLSAEPLWDSLLIAQKMRRRHDNDFEEIANRRKQITEVIQKSATTKDQPILLEIEQNWDRMKDLFDERGGVLERIIKLYEYDEESSTTSEWLREKMICADTIEPKEDESFNEVMVKKLEALTEEVENYKPRIVETHALLEDALVTPNTKDSTSQQTMKLKAVLARKQGEIESDYKALKKLVERKLKTLKAILQDADISHQIADIEQWIEVEQNQLNRYLASDSDELPTKLDDVMTNIQRRRSNLTDIKCNVVGQVQMQKIDDAFGMLDVFSFEVHRIRQKACRLEIFKKLESQTEDVIDAIQMKLEEINVSQSTSRKRQVAGDDLSNLAGDLETLRRRVVEALDRSKEVRAANADLAPQVYDTEERLEKQWTDVSKAYENHKKRMERCKILSELDNEMINMEQWIDTFNEEVTVVIGSIHDGLGVQVGLESIDTWREELSHRVDQLGGVKNSLSSVGNAITEQDKMDPWLERVSNIENNLVKARETIDTKQDDLCRFADILGAERDCERLYSWASGKRHQLETEATMCDAKTLVRRMNEVEKMMMSRIGEVDQLRDFLDNLKASKTSDTFQTTELENKFELLDVEWNHLEEELRRREVDLNDSMSQILIDEQFDTIRQWIKERTEALEADVEVSNKTKPDDIERMQKRHDELASDINDYHTIYEDFLNNGQVEEEKVQVIRHLWSSLIESSTTRQKSLAQECQKSRLFELLDGMSIWLIDAETDVHSTTNFIGLYNSVDAEKASRLLVSLGEQAGEKDDILIRIQCDESVDVIVEKLRNGISQLQMLIKANNEDLDVWKSMQKVVTAIDDEICWFKEINVIFSSTNVGNDVSSNDVLKRKHQRLQLETQRREQKVAKVVYLTTELVSSHRRPSLEYKFVEIDEKVAELTELLESNRQIAEIRTNRLEKWTEYFVTMNEIREKEQLLDQILDLKTGLPETVLADVERKLQVLETVGDHMDTLTIKAEQMSDDEVIRTKVAVTAIDQLRKKWLKMNEELKKMHQKIKESIEFTKFVSTCDTGIQCIREQEEKIGNLVRHQKPASNFENTAYHSTMTFVETYTKDTFEKLKVVCRKLQNSTDAEKKLSLVSERLNALKKQLDLLAEKIAVDDKFKLKVQNIQDEYSRTACELGNWLEQAEEDVSDVVWFQTKDSSEDCRETLLEILGTLRNEKSDLLGELELLEVELAELKEDVKTFTWHSFKTLATRMERLDQTISDRIRIADGEISRHSDNEKICEQAACTLKTYHNVIVDVKKELEILYSLKLEDQKKSLINLIDKVQKRGMIQDLEKWRSLMESRYIFNNKFSSATPHGVLVEMCQCLELMSSMLRSVEQSIADRNHNGVTEKQLHEFELAFDYFDRERNGWLDYKHFELCLKSQGYNFSAENTLKETMTLLDPSTTGHIQKHDYVRYMVKHETTNILDDHSAIEDALKNLDARKISDSMPRKEAEFFMSKIAKHAETSSDQVYLEYKDFVNSFY.

Spectrin repeat units lie at residues 46–146 (QVYL…RQLE) and 238–335 (QKFV…TDIE). 2 coiled-coil regions span residues 496–541 (VVEQ…TVNS) and 603–631 (DDQQKNMANEELRKTYENLKKIEMEVGRQ). 5 Spectrin repeats span residues 839–949 (YEYD…KTLK), 1048–1146 (KKLE…KRME), 1261–1361 (LGAE…VDLN), 1367–1459 (ILID…KSLA), and 1562–1667 (QKVV…NRLE). Residues 1835-1869 (QNSTDAEKKLSLVSERLNALKKQLDLLAEKIAVDD) are a coiled coil. EF-hand domains lie at 2104-2139 (KQLHEFELAFDYFDRERNGWLDYKHFELCLKSQGYN) and 2141-2176 (SAENTLKETMTLLDPSTTGHIQKHDYVRYMVKHETT). Aspartate 2154, serine 2156, threonine 2158, histidine 2160, and aspartate 2165 together coordinate Ca(2+).

It belongs to the spectrin family.

This is an uncharacterized protein from Caenorhabditis elegans.